A 512-amino-acid chain; its full sequence is 2,3-bisphosphoglycerate-independent phosphoglycerate mutase (512 aa).

Residues Asp11 and Ser61 each contribute to the Mn(2+) site. Residue Ser61 is the Phosphoserine intermediate of the active site. Substrate-binding positions include His122, Arg152–Asp153, Arg184, Arg190, Arg259–Arg262, and Lys332. Asp399, His403, Asp440, His441, and His459 together coordinate Mn(2+).

This sequence belongs to the BPG-independent phosphoglycerate mutase family. In terms of assembly, monomer. Mn(2+) is required as a cofactor.

The enzyme catalyses (2R)-2-phosphoglycerate = (2R)-3-phosphoglycerate. It functions in the pathway carbohydrate degradation; glycolysis; pyruvate from D-glyceraldehyde 3-phosphate: step 3/5. Catalyzes the interconversion of 2-phosphoglycerate and 3-phosphoglycerate. The polypeptide is 2,3-bisphosphoglycerate-independent phosphoglycerate mutase (Francisella tularensis subsp. tularensis (strain WY96-3418)).